A 907-amino-acid polypeptide reads, in one-letter code: TBC1 domain family member 30 (907 aa).

The segment at 51-74 is disordered; sequence ASETQDNGNKSGGDEIDVSLCDSQ. The Rab-GAP TBC domain occupies 243–451; the sequence is GIPKEWRKRV…KIWDSVFFEG (209 aa). Residues 583 to 645 are a coiled coil; sequence QKQIKDQKEE…QQYSRIKKRQ (63 aa). 3 disordered regions span residues 731-781, 812-859, and 872-907; these read AKGE…LDRT, ELSP…SPFP, and NLGL…SKKR. Positions 749 to 762 are enriched in basic and acidic residues; the sequence is EVPKDQPDTSKETE. Residues 831–843 show a composition bias toward low complexity; the sequence is ESQSDSHSSSSES. Polar residues predominate over residues 892–907; the sequence is KTFNKAANGTTGSKKR.

Functionally, may act as a GTPase-activating protein for Rab family protein(s). The protein is TBC1 domain family member 30 (tbc1d30) of Xenopus tropicalis (Western clawed frog).